Consider the following 336-residue polypeptide: tRNA N6-adenosine threonylcarbamoyltransferase (336 aa).

Positions 114 and 118 each coordinate Fe cation. Residues 136 to 140 (LVSGG), aspartate 169, glycine 182, aspartate 186, and asparagine 275 each bind substrate. A Fe cation-binding site is contributed by aspartate 301.

Belongs to the KAE1 / TsaD family. Fe(2+) is required as a cofactor.

Its subcellular location is the cytoplasm. The catalysed reaction is L-threonylcarbamoyladenylate + adenosine(37) in tRNA = N(6)-L-threonylcarbamoyladenosine(37) in tRNA + AMP + H(+). Its function is as follows. Required for the formation of a threonylcarbamoyl group on adenosine at position 37 (t(6)A37) in tRNAs that read codons beginning with adenine. Is involved in the transfer of the threonylcarbamoyl moiety of threonylcarbamoyl-AMP (TC-AMP) to the N6 group of A37, together with TsaE and TsaB. TsaD likely plays a direct catalytic role in this reaction. The chain is tRNA N6-adenosine threonylcarbamoyltransferase from Streptococcus pneumoniae (strain ATCC 700669 / Spain 23F-1).